We begin with the raw amino-acid sequence, 427 residues long: Serine hydroxymethyltransferase (427 aa).

122 to 124 (GHI) provides a ligand contact to (6S)-5,6,7,8-tetrahydrofolate. Lysine 228 carries the N6-(pyridoxal phosphate)lysine modification.

Belongs to the SHMT family. Homodimer. Requires pyridoxal 5'-phosphate as cofactor.

The protein resides in the cytoplasm. It functions in the pathway amino-acid biosynthesis; glycine biosynthesis; glycine from L-serine: step 1/1. Its function is as follows. Catalyzes the reversible interconversion of serine and glycine with a modified folate serving as the one-carbon carrier. Also exhibits a pteridine-independent aldolase activity toward beta-hydroxyamino acids, producing glycine and aldehydes, via a retro-aldol mechanism. The sequence is that of Serine hydroxymethyltransferase from Thermococcus onnurineus (strain NA1).